We begin with the raw amino-acid sequence, 443 residues long: Adenylosuccinate synthetase (443 aa).

GTP-binding positions include 12–18 and 40–42; these read GDEGKGK and GHT. Catalysis depends on Asp-13, which acts as the Proton acceptor. Residues Asp-13 and Gly-40 each coordinate Mg(2+). IMP contacts are provided by residues 13–16, 38–41, Thr-128, Arg-142, Gln-223, Thr-238, and Arg-302; these read DEGK and NAGH. Catalysis depends on His-41, which acts as the Proton donor. 298–304 provides a ligand contact to substrate; it reads TTTGRRR. GTP-binding positions include Arg-304, 330–332, and 412–414; these read KLD and SLG.

Belongs to the adenylosuccinate synthetase family. As to quaternary structure, homodimer. The cofactor is Mg(2+).

It localises to the cytoplasm. It catalyses the reaction IMP + L-aspartate + GTP = N(6)-(1,2-dicarboxyethyl)-AMP + GDP + phosphate + 2 H(+). Its pathway is purine metabolism; AMP biosynthesis via de novo pathway; AMP from IMP: step 1/2. Its function is as follows. Plays an important role in the de novo pathway of purine nucleotide biosynthesis. Catalyzes the first committed step in the biosynthesis of AMP from IMP. The protein is Adenylosuccinate synthetase of Picosynechococcus sp. (strain ATCC 27264 / PCC 7002 / PR-6) (Agmenellum quadruplicatum).